Consider the following 387-residue polypeptide: Succinate--CoA ligase [ADP-forming] subunit beta (387 aa).

One can recognise an ATP-grasp domain in the interval 9–244 (KEVLRKFGVA…LNEEEPSEIE (236 aa)). ATP-binding positions include K46, 53-55 (GRG), E99, C102, and E107. Mg(2+)-binding residues include N199 and D213. Residues N264 and 321–323 (GIM) contribute to the substrate site.

It belongs to the succinate/malate CoA ligase beta subunit family. In terms of assembly, heterotetramer of two alpha and two beta subunits. Mg(2+) serves as cofactor.

It catalyses the reaction succinate + ATP + CoA = succinyl-CoA + ADP + phosphate. It carries out the reaction GTP + succinate + CoA = succinyl-CoA + GDP + phosphate. The protein operates within carbohydrate metabolism; tricarboxylic acid cycle; succinate from succinyl-CoA (ligase route): step 1/1. Functionally, succinyl-CoA synthetase functions in the citric acid cycle (TCA), coupling the hydrolysis of succinyl-CoA to the synthesis of either ATP or GTP and thus represents the only step of substrate-level phosphorylation in the TCA. The beta subunit provides nucleotide specificity of the enzyme and binds the substrate succinate, while the binding sites for coenzyme A and phosphate are found in the alpha subunit. The protein is Succinate--CoA ligase [ADP-forming] subunit beta of Bdellovibrio bacteriovorus (strain ATCC 15356 / DSM 50701 / NCIMB 9529 / HD100).